We begin with the raw amino-acid sequence, 643 residues long: MVTSTGLLLLLGLLGQLWAGAAADSEAVVCEGTACYTAHWGKLSAAEAQHRCNENGGNLATVKSEEEARHVQEALAQLLKTKAPSETKIGKFWIGLQREKGKCTYHDLPMKGFSWVGGGEDTTYSNWYKASKSSCISKRCVSLILDLSLKPHPSHLPKWHESPCGTPDAPGNSIEGFLCKFNFKGMCSPLALGGPGQLTYTTPFQATTSSLKAVPFASVANVVCGDEAESKTNYYLCKETTAGVFHWGSSGPLCVSPKFGCSFNNGGCQQDCFEGGDGSFRCGCRPGFRLLDDLVTCASRNPCSSNPCTGGGMCHSVPLSENYTCHCPRGYQLDSSQVHCVDIDECEDSPCDQECINTPGGFHCECWVGYQSSGSKEEACEDVDECTAAYSPCAQGCTNTDGSFYCSCKEGYIMSGEDSTQCEDIDECLGNPCDTLCINTDGSFRCGCPAGFELAPNGVSCTRGSMFSELPARPPQKEDKGDGKESTVPLTEMPGSLNGSKDVSNRAQTTDLSIQSDSSTASVPLEIEVSSEASDVWLDLGTYLPTTSGHSQPTHEDSVPAHSDSDTDGQKLLLFYILGTVVAISLLLALALGLLIYLKRKAKKEEIKEKKAQNAADSYSWIPERAESRAPENQYSPTPGTDC.

The N-terminal stretch at Met-1–Ala-23 is a signal peptide. Over Asp-24 to Lys-571 the chain is Extracellular. The region spanning Glu-31–Ser-173 is the C-type lectin domain. Intrachain disulfides connect Cys-140–Cys-164, Cys-261–Cys-272, Cys-268–Cys-282, Cys-284–Cys-297, Cys-303–Cys-314, Cys-308–Cys-325, Cys-327–Cys-340, Cys-346–Cys-355, Cys-351–Cys-364, Cys-366–Cys-380, Cys-386–Cys-397, Cys-393–Cys-406, Cys-408–Cys-422, Cys-428–Cys-437, Cys-433–Cys-446, and Cys-448–Cys-461. 2 consecutive EGF-like domains span residues Pro-257–Ala-298 and Ser-299–Val-341. N-linked (GlcNAc...) asparagine glycosylation is present at Asn-322. One can recognise an EGF-like 3; calcium-binding domain in the interval Asp-342 to Glu-381. The 42-residue stretch at Asp-382–Glu-423 folds into the EGF-like 4; calcium-binding domain. In terms of domain architecture, EGF-like 5; calcium-binding spans Asp-424–Thr-462. The disordered stretch occupies residues Glu-469–Asp-517. The span at Pro-475 to Glu-485 shows a compositional bias: basic and acidic residues. Residues Leu-497–Asp-517 show a composition bias toward polar residues. The N-linked (GlcNAc...) asparagine glycan is linked to Asn-498. The helical transmembrane segment at Leu-572–Leu-592 threads the bilayer. The Cytoplasmic portion of the chain corresponds to Gly-593 to Cys-643. The tract at residues Glu-606–Cys-643 is disordered. Ser-618 carries the post-translational modification Phosphoserine. Phosphotyrosine is present on residues Tyr-619 and Tyr-635. Residues Pro-631 to Cys-643 are compositionally biased toward polar residues.

In terms of assembly, homodimer. Interacts with C1QBP; the association may represent a cell surface C1q receptor. Interacts with surfactant protein A/SFTPA1. Interacts with multimerin-2/MMRN2. Interacts with DAG1; this interaction plays an important role in endothelial cell migration. Interacts with CBL. Interacts with IGFBP7. Interacts with VEGFR2. N- and O-glycosylated. Post-translationally, phosphorylated on Tyr-619 and Tyr-635 by SRC; these phosphorylations promote endothelial cell adhesion and migration. In terms of tissue distribution, widely expressed. Highly expressed in lung and heart. Expressed at lower level in brain, thymus, liver, spleen, intestine, kidney, adrenal gland, muscle and testis. Expressed on endothelial cells, platelets, undifferentiated monocytes and circulating natural killer cells.

The protein localises to the cell membrane. Its function is as follows. Cell surface receptor that plays a role in various physiological processes including inflammation, phagocytosis, and cell adhesion. Plays a role in phagocytosis and enhances the uptake of apoptotic cells and immune complexes by acting as a receptor for defense collagens including surfactant protein A/SFTPA1, C1q, and mannose-binding lectin (MBL2). Plays a role in the regulation of endothelial cell function and adhesion by activating angiogenesis. Mechanistically, exerts its angiogenic function by associating with beta-dystroglycan, leading to SRC-dependent phosphorylation and subsequent recruitment of CBL. In turn, CBL provides a docking site for downstream signaling components, such as CRKL to enhance cell migration. Participates in angiogenesis also by acting as a receptor for the ECM pan-endothelial glycoprotein multimerin-2/MMRN2 and IGFBP7 ligands. Both ligands play a non-redundant role in CD93-mediated endothelial cell function. Acts as a key regulator of endothelial barrier function through modulating VEGFR2 function. This is Complement component C1q receptor (Cd93) from Rattus norvegicus (Rat).